The primary structure comprises 297 residues: Bifunctional protein FolD 2 (297 aa).

NADP(+) contacts are provided by residues 172–174 (GRG), Thr-199, and Val-240.

It belongs to the tetrahydrofolate dehydrogenase/cyclohydrolase family. As to quaternary structure, homodimer.

It catalyses the reaction (6R)-5,10-methylene-5,6,7,8-tetrahydrofolate + NADP(+) = (6R)-5,10-methenyltetrahydrofolate + NADPH. The enzyme catalyses (6R)-5,10-methenyltetrahydrofolate + H2O = (6R)-10-formyltetrahydrofolate + H(+). It functions in the pathway one-carbon metabolism; tetrahydrofolate interconversion. Catalyzes the oxidation of 5,10-methylenetetrahydrofolate to 5,10-methenyltetrahydrofolate and then the hydrolysis of 5,10-methenyltetrahydrofolate to 10-formyltetrahydrofolate. The polypeptide is Bifunctional protein FolD 2 (Paenarthrobacter aurescens (strain TC1)).